The chain runs to 142 residues: Hemoglobin subunit alpha-3 (142 aa).

The region spanning 2–142 is the Globin domain; that stretch reads TLTDSDKAAV…VATVLTSKYR (141 aa). His59 is a binding site for O2. His88 serves as a coordination point for heme b.

The protein belongs to the globin family. Heterotetramer of two alpha chains and two beta chains. In terms of tissue distribution, red blood cells.

In terms of biological role, this is a larval (tadpole) alpha-globin. The sequence is that of Hemoglobin subunit alpha-3 (hba3) from Xenopus laevis (African clawed frog).